The chain runs to 338 residues: Glyceraldehyde-3-phosphate dehydrogenase (338 aa).

NAD(+) contacts are provided by Arg13, Ile14, Asp35, Arg80, and Ser123. 8 residues coordinate D-glyceraldehyde 3-phosphate: Ser152, Cys153, Thr154, Thr183, Arg198, Thr212, Gly213, and Arg235. Cys153 acts as the Nucleophile in catalysis. Asn317 contacts NAD(+).

This sequence belongs to the glyceraldehyde-3-phosphate dehydrogenase family. Homotetramer.

The protein localises to the tegument membrane. The catalysed reaction is D-glyceraldehyde 3-phosphate + phosphate + NAD(+) = (2R)-3-phospho-glyceroyl phosphate + NADH + H(+). It participates in carbohydrate degradation; glycolysis; pyruvate from D-glyceraldehyde 3-phosphate: step 1/5. Functionally, this antigen is associated with human resistance to schistosomiasis. This is Glyceraldehyde-3-phosphate dehydrogenase from Schistosoma mansoni (Blood fluke).